Here is a 109-residue protein sequence, read N- to C-terminus: Cell division protein ZapA (109 aa).

Residues 21–99 (PDQRDALNQA…IEQALLEQGR (79 aa)) adopt a coiled-coil conformation.

It belongs to the ZapA family. Type 1 subfamily. As to quaternary structure, homodimer. Interacts with FtsZ.

The protein localises to the cytoplasm. Functionally, activator of cell division through the inhibition of FtsZ GTPase activity, therefore promoting FtsZ assembly into bundles of protofilaments necessary for the formation of the division Z ring. It is recruited early at mid-cell but it is not essential for cell division. The polypeptide is Cell division protein ZapA (Shigella boydii serotype 18 (strain CDC 3083-94 / BS512)).